We begin with the raw amino-acid sequence, 101 residues long: Urease subunit beta (101 aa).

This sequence belongs to the urease beta subunit family. As to quaternary structure, heterotrimer of UreA (gamma), UreB (beta) and UreC (alpha) subunits. Three heterotrimers associate to form the active enzyme.

Its subcellular location is the cytoplasm. It carries out the reaction urea + 2 H2O + H(+) = hydrogencarbonate + 2 NH4(+). It functions in the pathway nitrogen metabolism; urea degradation; CO(2) and NH(3) from urea (urease route): step 1/1. In Thermosynechococcus vestitus (strain NIES-2133 / IAM M-273 / BP-1), this protein is Urease subunit beta.